The chain runs to 89 residues: Translation initiation factor IF-1, chloroplastic (89 aa).

In terms of domain architecture, S1-like spans 1-72; the sequence is MKKQDLIDME…TKGRIIYRLR (72 aa).

This sequence belongs to the IF-1 family. In terms of assembly, component of the 30S ribosomal translation pre-initiation complex which assembles on the 30S ribosome in the order IF-2 and IF-3, IF-1 and N-formylmethionyl-tRNA(fMet); mRNA recruitment can occur at any time during PIC assembly.

Its subcellular location is the plastid. The protein resides in the chloroplast. In terms of biological role, one of the essential components for the initiation of protein synthesis. Stabilizes the binding of IF-2 and IF-3 on the 30S subunit to which N-formylmethionyl-tRNA(fMet) subsequently binds. Helps modulate mRNA selection, yielding the 30S pre-initiation complex (PIC). Upon addition of the 50S ribosomal subunit IF-1, IF-2 and IF-3 are released leaving the mature 70S translation initiation complex. The polypeptide is Translation initiation factor IF-1, chloroplastic (Angiopteris evecta (Mule's foot fern)).